A 1742-amino-acid chain; its full sequence is Kinase non-catalytic C-lobe domain-containing protein 1 (1742 aa).

The region spanning 37–217 (VSLADILSLR…QELSENTWRG (181 aa)) is the KIND 1 domain. Disordered stretches follow at residues 215 to 288 (WRGR…EGLA) and 365 to 455 (FKTQ…TEQS). At Ser-267 the chain carries Phosphoserine. Polar residues predominate over residues 403–412 (LEASSPSQGS). Residues 426-445 (DSDHEGHIPRSEEKIPEESR) are compositionally biased toward basic and acidic residues. The 165-residue stretch at 456–620 (LSLKDLLSKL…RASTCKVHPE (165 aa)) folds into the KIND 2 domain. 4 disordered regions span residues 703–727 (DQLA…REGT), 744–876 (SNQL…KMTA), 948–1006 (GPAS…LSDI), and 1028–1076 (VTRE…ASDF). The span at 711–727 (SNEKPKEGSGHLDREGT) shows a compositional bias: basic and acidic residues. The segment covering 755–771 (GATPDPDGDSGSPSSAT) has biased composition (low complexity). Residues 782–791 (VTQQKGTSGT) are compositionally biased toward polar residues. Basic and acidic residues predominate over residues 847–861 (SDGHPEKPRPADRKL). Residues 949-965 (PASPSESTSEEPGSQPE) are compositionally biased toward low complexity. Ser-951 is modified (phosphoserine). Positions 1043 to 1053 (GPSQDSTSHAS) are enriched in polar residues. Residues 1112 to 1177 (HTELEAQSPE…EMKSKVQFLS (66 aa)) adopt a coiled-coil conformation. One can recognise an N-terminal Ras-GEF domain in the interval 1239-1367 (KARILQAGTP…ALLEVGTERR (129 aa)). One can recognise a Ras-GEF domain in the interval 1461–1712 (STNQLFTQLT…SGADVSILAA (252 aa)).

Interacts (via KIND2) with MAP2; the interaction enhances MAP2 phosphorylation and localizes KNDC1 to dendrites. Highly expressed in the brain and at low levels in the ovary. In the brain it is most prominently expressed in the cerebellum where it is restricted to the granular Purkinje cell layer.

The protein resides in the cell projection. Its subcellular location is the dendrite. It is found in the perikaryon. Functionally, RAS-Guanine nucleotide exchange factor (GEF) that controls the negative regulation of neuronal dendrite growth by mediating a signaling pathway linking RAS and MAP2. May be involved in cellular senescence. The chain is Kinase non-catalytic C-lobe domain-containing protein 1 from Mus musculus (Mouse).